We begin with the raw amino-acid sequence, 223 residues long: Coiled-coil domain-containing protein 70 (223 aa).

Residues 129–153 (NALWERDRNLLQEDKALWEEEKALW) adopt a coiled-coil conformation. Residues 199–223 (EQRHQNGPYNANEEPQSTSFPRGRA) are disordered. Residues 203–223 (QNGPYNANEEPQSTSFPRGRA) show a composition bias toward polar residues.

The polypeptide is Coiled-coil domain-containing protein 70 (Mus musculus (Mouse)).